A 139-amino-acid chain; its full sequence is ATP synthase epsilon chain (139 aa).

Residues 89 to 110 (EARAEQARAEAEARRREAQSEH) are disordered.

It belongs to the ATPase epsilon chain family. In terms of assembly, F-type ATPases have 2 components, CF(1) - the catalytic core - and CF(0) - the membrane proton channel. CF(1) has five subunits: alpha(3), beta(3), gamma(1), delta(1), epsilon(1). CF(0) has three main subunits: a, b and c.

It localises to the cell membrane. Functionally, produces ATP from ADP in the presence of a proton gradient across the membrane. The sequence is that of ATP synthase epsilon chain from Chloroflexus aggregans (strain MD-66 / DSM 9485).